Reading from the N-terminus, the 145-residue chain is UPF0763 protein CFF8240_1572 (145 aa).

This sequence belongs to the UPF0763 family.

The sequence is that of UPF0763 protein CFF8240_1572 from Campylobacter fetus subsp. fetus (strain 82-40).